A 592-amino-acid chain; its full sequence is Methionine--tRNA ligase (592 aa).

Positions 12-22 (PYANGPFHVGH) match the 'HIGH' region motif. Cys144, Cys147, Cys157, and Cys160 together coordinate Zn(2+). A 'KMSKS' region motif is present at residues 342-346 (KMSTS). Residue Thr345 coordinates ATP.

This sequence belongs to the class-I aminoacyl-tRNA synthetase family. MetG type 1 subfamily. In terms of assembly, monomer. It depends on Zn(2+) as a cofactor.

It is found in the cytoplasm. The catalysed reaction is tRNA(Met) + L-methionine + ATP = L-methionyl-tRNA(Met) + AMP + diphosphate. In terms of biological role, is required not only for elongation of protein synthesis but also for the initiation of all mRNA translation through initiator tRNA(fMet) aminoacylation. This is Methionine--tRNA ligase from Roseiflexus castenholzii (strain DSM 13941 / HLO8).